Reading from the N-terminus, the 342-residue chain is Probable allantoicase (342 aa).

It belongs to the allantoicase family.

It catalyses the reaction allantoate + H2O = (S)-ureidoglycolate + urea. The protein operates within nitrogen metabolism; (S)-allantoin degradation; (S)-ureidoglycolate from allantoate (aminidohydrolase route): step 1/1. Its function is as follows. Utilization of purines as secondary nitrogen sources, when primary sources are limiting. This Schizosaccharomyces pombe (strain 972 / ATCC 24843) (Fission yeast) protein is Probable allantoicase.